The chain runs to 168 residues: Transcriptional repressor NrdR (168 aa).

A zinc finger spans residues 3-34; the sequence is CPFCQDAENKVIDSRESHEGSVIRRRRECLTC. Positions 49–139 constitute an ATP-cone domain; sequence PLIVKKDGRR…VYRSFRDIAE (91 aa).

The protein belongs to the NrdR family. Requires Zn(2+) as cofactor.

Negatively regulates transcription of bacterial ribonucleotide reductase nrd genes and operons by binding to NrdR-boxes. This is Transcriptional repressor NrdR from Myxococcus xanthus (strain DK1622).